The sequence spans 649 residues: Probable cyclic nucleotide-gated ion channel 12 (649 aa).

The Cytoplasmic portion of the chain corresponds to 1–43 (MNHRRSKFARIDSMGVDGKLKSVRGRLKKVYGKMKTLENWRKT). The chain crosses the membrane as a helical span at residues 44-64 (VLLACVVALAIDPLFLFIPLI). The Extracellular portion of the chain corresponds to 65–76 (DSQRFCFTFDKT). Residues 77–97 (LVAVVCVIRTFIDTFYVIHII) traverse the membrane as a helical segment. At 98–128 (YYLITETIAPRSQASLRGEIVVHSKATLKTR) the chain is on the cytoplasmic side. A helical transmembrane segment spans residues 129–149 (LLFHFIVDIISVLPIPQVVVL). Residues 150–162 (TLIPLSASLVSER) are Extracellular-facing. The chain crosses the membrane as a helical span at residues 163–183 (ILKWIILSQYVPRIIRMYPLY). Residues 184-200 (KEVTRAFGTVAESKWAG) lie on the Cytoplasmic side of the membrane. Residues 201-221 (AALNLFLYMLHSYVFGAFWYL) traverse the membrane as a helical segment. Over 222 to 329 (SSIERKSKCW…QNLETSNSAG (108 aa)) the chain is Extracellular. The chain crosses the membrane as a helical span at residues 330-350 (EIFFAIIICVSGLLLFAVLIG). Residues 351–649 (NVQKYLQSST…ADLEFAKAEA (299 aa)) lie on the Cytoplasmic side of the membrane. Residues 436–559 (LNIM…TFRL) and Glu507 each bind a nucleoside 3',5'-cyclic phosphate. A calmodulin-binding region spans residues 545-560 (LNVFQRQKLQRTFRLY). The 30-residue stretch at 565–594 (RSWAAFFIQAAWRKHCKRKLSKTRDNENIP) folds into the IQ domain. The segment at 618 to 649 (RRKDTADCSSSPDMSPPVPHKPADLEFAKAEA) is disordered. Basic and acidic residues predominate over residues 638 to 649 (KPADLEFAKAEA).

The protein belongs to the cyclic nucleotide-gated cation channel (TC 1.A.1.5) family. As to quaternary structure, homotetramer or heterotetramer.

It is found in the cell membrane. Its function is as follows. Probable cyclic nucleotide-gated ion channel. This chain is Probable cyclic nucleotide-gated ion channel 12 (CNGC12), found in Arabidopsis thaliana (Mouse-ear cress).